A 558-amino-acid polypeptide reads, in one-letter code: Membrane transporter D2 (558 aa).

A disordered region spans residues 1–28; the sequence is MTLKKRSSAPELPTSLDEDEEEDSPQPL. Over 1 to 38 the chain is Cytoplasmic; sequence MTLKKRSSAPELPTSLDEDEEEDSPQPLSNTPFFSMKN. Residues 39–59 form a helical membrane-spanning segment; sequence LIVATPIILTPLLYGYNLGFV. Residues 60–152 are Extracellular-facing; sequence GPYSTMYGYA…QVGYSSIQSG (93 aa). The chain crosses the membrane as a helical span at residues 153 to 173; that stretch reads VFAGSLVIGSTMGALMGGYLT. Residues 174 to 179 lie on the Cytoplasmic side of the membrane; the sequence is KRLDYC. The chain crosses the membrane as a helical span at residues 180-200; it reads KSFLFIGLLSVIGNVLTHVAT. Over 201–204 the chain is Extracellular; sequence GLFH. A helical membrane pass occupies residues 205–225; the sequence is YWVLFVARIVLGFPLGWQSIT. The Cytoplasmic portion of the chain corresponds to 226–241; sequence SSHYTDKFAPANHAKT. The chain crosses the membrane as a helical span at residues 242-262; that stretch reads LGTLFQVSVSTGIFVTSFFGL. Over 263 to 281 the chain is Extracellular; sequence VLGNTIQYDAASNANTMGR. The chain crosses the membrane as a helical span at residues 282–302; that stretch reads MQGLVSVSTLLSIFVVFLPLI. Over 303-335 the chain is Cytoplasmic; that stretch reads TKDGYSKSRRGDYEGENSEDASRKAAEEYTMTQ. A helical transmembrane segment spans residues 336–356; the sequence is MIGPILNGVAMGCVTQLTGIN. Over 357-373 the chain is Extracellular; that stretch reads ANMNFAPTIMSNLGLQP. Residues 374-394 traverse the membrane as a helical segment; that stretch reads LVGNIIVMAWNMLATFCVIPL. At 395–402 the chain is on the cytoplasmic side; the sequence is SRRFSMRT. The helical transmembrane segment at 403-423 threads the bilayer; that stretch reads LFLFCGFVGSLCCVFLGGIPV. At 424-441 the chain is on the extracellular side; that stretch reads YPGVTKSDKAISGIAITG. Residues 442-463 traverse the membrane as a helical segment; sequence IAIFIALYEMGVGPCFYVLAVD. The Cytoplasmic segment spans residues 464–478; sequence VFPESFRPIGSSITV. The helical transmembrane segment at 479 to 499 threads the bilayer; it reads GVMFIFNLIINICYPIATEGI. The Extracellular portion of the chain corresponds to 500–512; the sequence is SGGPSGNPNKGQA. The chain crosses the membrane as a helical span at residues 513–533; sequence VAFIFFGCIGVVACVIEYFFL. Residues 534–558 are Cytoplasmic-facing; it reads QPWVEPEAKMTDDLDGAAVPEGKHD.

The protein belongs to the major facilitator superfamily. Sugar transporter (TC 2.A.1.1) family.

It localises to the membrane. This Leishmania donovani protein is Membrane transporter D2.